Consider the following 310-residue polypeptide: tRNA dimethylallyltransferase (310 aa).

14 to 21 (GPTASGKS) provides a ligand contact to ATP. 16 to 21 (TASGKS) contacts substrate. Interaction with substrate tRNA regions lie at residues 39 to 42 (DSMQ) and 163 to 167 (QRIVR).

It belongs to the IPP transferase family. As to quaternary structure, monomer. Mg(2+) serves as cofactor.

It carries out the reaction adenosine(37) in tRNA + dimethylallyl diphosphate = N(6)-dimethylallyladenosine(37) in tRNA + diphosphate. Functionally, catalyzes the transfer of a dimethylallyl group onto the adenine at position 37 in tRNAs that read codons beginning with uridine, leading to the formation of N6-(dimethylallyl)adenosine (i(6)A). The chain is tRNA dimethylallyltransferase from Brucella melitensis biotype 2 (strain ATCC 23457).